Reading from the N-terminus, the 555-residue chain is Beta-fructofuranosidase, cell wall isozyme (555 aa).

Positions 1 to 22 are cleaved as a signal peptide; that stretch reads MAISSIFLLSLFSLIYVIPIEA. Substrate-binding positions include 58-61, Gln-77, Trp-85, and 120-121; these read WIND and WS. The active site involves Asp-61. Asp-140 is an active-site residue. N-linked (GlcNAc...) asparagine glycosylation is found at Asn-154 and Asn-181. Substrate is bound by residues 186 to 187, Glu-241, and Asp-277; that span reads RD. N-linked (GlcNAc...) asparagine glycosylation occurs at Asn-337. Residues Cys-435 and Cys-481 are joined by a disulfide bond.

This sequence belongs to the glycosyl hydrolase 32 family.

The catalysed reaction is Hydrolysis of terminal non-reducing beta-D-fructofuranoside residues in beta-D-fructofuranosides.. The polypeptide is Beta-fructofuranosidase, cell wall isozyme (BFRUCT1) (Pisum sativum (Garden pea)).